Reading from the N-terminus, the 115-residue chain is Salivary anti-complement protein (115 aa).

The first 22 residues, 1–22, serve as a signal peptide directing secretion; it reads MKFFYLIFSAIFFLADPALVKC. 3 disulfide bridges follow: C26/C108, C41/C92, and C83/C101.

In terms of assembly, may form multimers. In terms of tissue distribution, salivary gland (at protein level).

Its subcellular location is the secreted. Salivary protein that inhibits the classical pathway of complement system activation in the host while having no inhibitory effect on the alternative or lectin pathways. Prevent cleavage of host C4 and consequently impairs the activation of factors downstream of C4b in the complement cascade. The polypeptide is Salivary anti-complement protein (Lutzomyia longipalpis (Sand fly)).